A 471-amino-acid polypeptide reads, in one-letter code: Tyrosine--tRNA ligase (471 aa).

Tyrosine 41 contacts L-tyrosine. The 'HIGH' region motif lies at 46–55; it reads PTAPSLHVGN. Residues tyrosine 176 and glutamine 180 each coordinate L-tyrosine. The 'KMSKS' region signature appears at 236 to 240; sequence KFGKT. ATP is bound at residue lysine 239. The region spanning 403-471 is the S4 RNA-binding domain; that stretch reads DLITHILQKV…GKKHLAAVFY (69 aa).

This sequence belongs to the class-I aminoacyl-tRNA synthetase family. TyrS type 1 subfamily. Homodimer.

The protein resides in the cytoplasm. The catalysed reaction is tRNA(Tyr) + L-tyrosine + ATP = L-tyrosyl-tRNA(Tyr) + AMP + diphosphate + H(+). Functionally, catalyzes the attachment of tyrosine to tRNA(Tyr) in a two-step reaction: tyrosine is first activated by ATP to form Tyr-AMP and then transferred to the acceptor end of tRNA(Tyr). This chain is Tyrosine--tRNA ligase, found in Tropheryma whipplei (strain Twist) (Whipple's bacillus).